A 363-amino-acid chain; its full sequence is Ethanol acetyltransferase 1 (363 aa).

The N-terminal 19 residues, 1-19 (MLLAYTVRPSNWSFTRRAY), are a transit peptide targeting the mitochondrion. The AB hydrolase-1 domain maps to 65-164 (PIIFYHGLLG…FSAACIIDNS (100 aa)). Active-site charge relay system residues include Ser-138, Asp-162, and His-313.

This sequence belongs to the AB hydrolase superfamily.

The protein resides in the mitochondrion. It catalyses the reaction ethanol + acetyl-CoA = ethyl acetate + CoA. It carries out the reaction acetyl-CoA + H2O = acetate + CoA + H(+). The catalysed reaction is ethyl acetate + H2O = ethanol + acetate + H(+). Its function is as follows. Alcohol acetyltransferase that catalyzes the synthesis of ethyl acetate from ethanol and acetyl-CoA. Can also function as a thioesterase by hydrolyzing acetyl-CoA in the absence of ethanol, as well as esterase hydrolyzing ethyl acetate. This is Ethanol acetyltransferase 1 (EAT1) from Kluyveromyces marxianus (strain DMKU3-1042 / BCC 29191 / NBRC 104275) (Yeast).